We begin with the raw amino-acid sequence, 333 residues long: Ribokinase (333 aa).

Substrate-binding positions include 10–12 (NYD), 38–42 (GKGLN), and glutamate 149. Residues asparagine 193 and 248–253 (TLGSRG) contribute to the ATP site. K(+) contacts are provided by aspartate 277 and threonine 279. ATP is bound at residue 282-283 (GD). A substrate-binding site is contributed by aspartate 283. Aspartate 283 serves as the catalytic Proton acceptor. 4 residues coordinate K(+): threonine 313, arginine 316, glycine 318, and serine 322.

This sequence belongs to the carbohydrate kinase PfkB family. Ribokinase subfamily. Homodimer. The cofactor is Mg(2+).

Its subcellular location is the cytoplasm. It is found in the nucleus. The enzyme catalyses D-ribose + ATP = D-ribose 5-phosphate + ADP + H(+). The protein operates within carbohydrate metabolism; D-ribose degradation; D-ribose 5-phosphate from beta-D-ribopyranose: step 2/2. Activated by a monovalent cation that binds near, but not in, the active site. The most likely occupant of the site in vivo is potassium. Ion binding induces a conformational change that may alter substrate affinity. Its function is as follows. Catalyzes the phosphorylation of ribose at O-5 in a reaction requiring ATP and magnesium. The resulting D-ribose-5-phosphate can then be used either for sythesis of nucleotides, histidine, and tryptophan, or as a component of the pentose phosphate pathway. This Saccharomyces cerevisiae (strain ATCC 204508 / S288c) (Baker's yeast) protein is Ribokinase.